Reading from the N-terminus, the 257-residue chain is Outer dense fiber protein 4 (257 aa).

The tract at residues 1–41 is disordered; that stretch reads MDAEYSGNEFPRSEGERDQHQRPGKERKSGEAGWGTGELGQ. Basic and acidic residues predominate over residues 11 to 30; sequence PRSEGERDQHQRPGKERKSG. Ser-64 is subject to Phosphoserine. The next 3 helical transmembrane spans lie at 80 to 100, 152 to 172, and 179 to 199; these read AQVL…VVAF, VTFI…FELE, and IGWS…CAIL.

As to expression, expressed in testis and sperm; especially localized to sperm tail (at protein level).

The protein resides in the membrane. Its function is as follows. Component of the outer dense fibers (ODF) of spermatozoa which could be involved in sperm tail structure, sperm movement and general organization of cellular cytoskeleton. The chain is Outer dense fiber protein 4 (ODF4) from Homo sapiens (Human).